The primary structure comprises 368 residues: RNA polymerase sigma factor SigA (368 aa).

Residues 71–83 (NEKDSSDTDDKIN) are compositionally biased toward basic and acidic residues. Residues 71 to 90 (NEKDSSDTDDKINPNDLSAP) form a disordered region. The segment at 135–205 (LAEANLRLVV…TRAIADQART (71 aa)) is sigma-70 factor domain-2. The short motif at 159–162 (DLIQ) is the Interaction with polymerase core subunit RpoC element. The segment at 214–290 (ETINKLIRVQ…DQEAQSPSDH (77 aa)) is sigma-70 factor domain-3. The tract at residues 303–356 (VLDTLTDREENVLRLRFGLDDGRTRTLEEVGKVFGVTRERIRQIEAKALRKLRH) is sigma-70 factor domain-4. The H-T-H motif DNA-binding region spans 329 to 348 (LEEVGKVFGVTRERIRQIEA).

Belongs to the sigma-70 factor family. RpoD/SigA subfamily. In terms of assembly, interacts transiently with the RNA polymerase catalytic core.

The protein localises to the cytoplasm. In terms of biological role, sigma factors are initiation factors that promote the attachment of RNA polymerase to specific initiation sites and are then released. This sigma factor is the primary sigma factor during exponential growth. The sequence is that of RNA polymerase sigma factor SigA from Staphylococcus epidermidis (strain ATCC 35984 / DSM 28319 / BCRC 17069 / CCUG 31568 / BM 3577 / RP62A).